The chain runs to 553 residues: Cytokine-like nuclear factor N-PAC (553 aa).

The region spanning 8–66 is the PWWP domain; the sequence is LGDLVWGKLGRYPPWPGKIVNPPKDLKKPRGKKCFFVKFFGTEDHAWIKVEQLKPYHAH. Basic and acidic residues-rich tracts occupy residues 92 to 145 and 162 to 182; these read RAKG…EGKK and RAQEQSPRKRGRPPKDEKDLS. The disordered stretch occupies residues 92-190; it reads RAKGKDQTSS…LSIPESSTVK (99 aa). The residue at position 130 (serine 130) is a Phosphoserine. Lysine 135 participates in a covalent cross-link: Glycyl lysine isopeptide (Lys-Gly) (interchain with G-Cter in SUMO2). The residue at position 167 (serine 167) is a Phosphoserine. The a.T hook DNA-binding region spans 168-180; the sequence is PRKRGRPPKDEKD. Glycyl lysine isopeptide (Lys-Gly) (interchain with G-Cter in SUMO2) cross-links involve residues lysine 176, lysine 179, lysine 201, and lysine 211. Residues 214 to 217 form an interaction with histone H3 region; that stretch reads DPHF. The interval 216–225 is interaction with KDM1B; that stretch reads HFHHFLLSQT. Residues lysine 227, lysine 237, lysine 240, and lysine 269 each participate in a glycyl lysine isopeptide (Lys-Gly) (interchain with G-Cter in SUMO2) cross-link. The tract at residues 261 to 553 is dehydrogenase domain; it reads GSVTPTDKKI…MSAVYRAYIH (293 aa). An NAD(+)-binding site is contributed by 271-285; sequence GFLGLGLMGSGIVSN. Lysine 302 participates in a covalent cross-link: Glycyl lysine isopeptide (Lys-Gly) (interchain with G-Cter in SUMO2). NAD(+) is bound by residues threonine 362 and lysine 505. Serine 540 bears the Phosphoserine mark.

This sequence belongs to the HIBADH-related family. NP60 subfamily. As to quaternary structure, homotetramere. Interacts with MAPK14. Interacts with KDM1B at nucleosomes; this interaction stimulates H3K4me1 and H3K4me2 demethylation. Binds to mononucleosomes. Interacts with GATA4; the interaction is required for a synergistic activation of GATA4 target genes transcription.

It localises to the nucleus. The protein resides in the chromosome. In terms of biological role, cytokine-like nuclear factor with chromatin gene reader activity involved in chromatin modification and regulation of gene expression. Acts as a nucleosome-destabilizing factor that is recruited to genes during transcriptional activation. Recognizes and binds histone H3 without a preference for specific epigenetic markers and also binds DNA. Interacts with KDM1B and promotes its histone demethylase activity by facilitating the capture of H3 tails, they form a multifunctional enzyme complex that modifies transcribed chromatin and facilitates Pol II transcription through nucleosomes. Stimulates the acetylation of 'Lys-56' of nucleosomal histone H3 (H3K56ac) by EP300. With GATA4, co-binds a defined set of heart development genes and coregulates their expression during cardiomyocyte differentiation. Regulates p38 MAP kinase activity by mediating stress activation of MAPK14/p38alpha and specifically regulating MAPK14 signaling. Indirectly promotes phosphorylation of MAPK14 and activation of ATF2. The phosphorylation of MAPK14 requires upstream activity of MAP2K4 and MAP2K6. This chain is Cytokine-like nuclear factor N-PAC (GLYR1), found in Bos taurus (Bovine).